A 196-amino-acid polypeptide reads, in one-letter code: Small ribosomal subunit protein uS4c (196 aa).

The disordered stretch occupies residues 20-39; that stretch reads GLTRKTPKSGSNLKKKFHSG. The S4 RNA-binding domain maps to 89-152; it reads MRLDNILFRL…RSKCLVQNSI (64 aa).

It belongs to the universal ribosomal protein uS4 family. Part of the 30S ribosomal subunit. Contacts protein S5. The interaction surface between S4 and S5 is involved in control of translational fidelity.

The protein resides in the plastid. Its subcellular location is the chloroplast. Functionally, one of the primary rRNA binding proteins, it binds directly to 16S rRNA where it nucleates assembly of the body of the 30S subunit. In terms of biological role, with S5 and S12 plays an important role in translational accuracy. The protein is Small ribosomal subunit protein uS4c (rps4) of Dendrocalamus giganteus (Giant bamboo).